Here is a 261-residue protein sequence, read N- to C-terminus: uncharacterized protein (261 aa).

Belongs to the BtpA family.

This is an uncharacterized protein from Methanocaldococcus jannaschii (strain ATCC 43067 / DSM 2661 / JAL-1 / JCM 10045 / NBRC 100440) (Methanococcus jannaschii).